A 209-amino-acid polypeptide reads, in one-letter code: UPF0502 protein mll4256 (209 aa).

The protein belongs to the UPF0502 family.

The protein is UPF0502 protein mll4256 of Mesorhizobium japonicum (strain LMG 29417 / CECT 9101 / MAFF 303099) (Mesorhizobium loti (strain MAFF 303099)).